The sequence spans 325 residues: Replication factor C small subunit (325 aa).

47–54 (GPPGTGKT) is a binding site for ATP.

This sequence belongs to the activator 1 small subunits family. RfcS subfamily. In terms of assembly, heteromultimer composed of small subunits (RfcS) and large subunits (RfcL).

Part of the RFC clamp loader complex which loads the PCNA sliding clamp onto DNA. The sequence is that of Replication factor C small subunit from Aeropyrum pernix (strain ATCC 700893 / DSM 11879 / JCM 9820 / NBRC 100138 / K1).